Consider the following 317-residue polypeptide: Transaldolase (317 aa).

Lysine 126 acts as the Schiff-base intermediate with substrate in catalysis.

The protein belongs to the transaldolase family. Type 1 subfamily. As to quaternary structure, homodimer.

The protein localises to the cytoplasm. The catalysed reaction is D-sedoheptulose 7-phosphate + D-glyceraldehyde 3-phosphate = D-erythrose 4-phosphate + beta-D-fructose 6-phosphate. It participates in carbohydrate degradation; pentose phosphate pathway; D-glyceraldehyde 3-phosphate and beta-D-fructose 6-phosphate from D-ribose 5-phosphate and D-xylulose 5-phosphate (non-oxidative stage): step 2/3. Transaldolase is important for the balance of metabolites in the pentose-phosphate pathway. The sequence is that of Transaldolase from Paraburkholderia phytofirmans (strain DSM 17436 / LMG 22146 / PsJN) (Burkholderia phytofirmans).